Consider the following 567-residue polypeptide: TNF receptor-associated factor 3 (567 aa).

Residues 1 to 26 (MESSKKMDAAGTLQPNPPLKLQPDRG) form a disordered region. C55 participates in a covalent cross-link: Glycyl cysteine thioester (Cys-Gly) (interchain with G-Cter in ubiquitin). The segment at 67 to 76 (CGHRFCESCM) adopts an RING-type zinc-finger fold. K106 participates in a covalent cross-link: Glycyl lysine isopeptide (Lys-Gly) (interchain with G-Cter in ubiquitin). C123 participates in a covalent cross-link: Glycyl cysteine thioester (Cys-Gly) (interchain with G-Cter in ubiquitin). 2 TRAF-type zinc fingers span residues 134–189 (VHLK…IKLQ) and 190–248 (KHED…QQIK). Glycyl lysine isopeptide (Lys-Gly) (interchain with G-Cter in ubiquitin) cross-links involve residues K155 and K167. A coiled-coil region spans residues 266–337 (SNSLEKKVSL…KLKELDKEIR (72 aa)). K328 participates in a covalent cross-link: Glycyl lysine isopeptide (Lys-Gly) (interchain with G-Cter in ubiquitin). Residues 414–559 (NGVLIWKIRD…DDTIFIKVIV (146 aa)) form the MATH domain.

The protein belongs to the TNF receptor-associated factor family. A subfamily. Homotrimer. Heterotrimer with TRAF2 and TRAF5. Interacts with LTBR/TNFRSF3, TNFRSF4, TNFRSF5/CD40, TNFRSF8/CD30, TNFRSF13C TNFRSF17/BCMA, TLR4 and EDAR. Interacts with MAP3K5, MAP3K14, TRAIP/TRIP, TDP2/TTRAP, TANK/ITRAF and TRAF3IP1. Interaction with TNFRSF5/CD40 is modulated by TANK/ITRAF, which competes for the same binding site. Interacts with TICAM1. Interacts with TRAFD1. Interacts with OTUB1, OTUB2 and OTUD5. Interacts with RNF216, OPTN and TBK1. Identified in a complex with TRAF2, MAP3K14 and BIRC3. Upon exposure to bacterial lipopolysaccharide (LPS), recruited to a transient complex containing TLR4, TRAF3, TRAF6, IKBKG, MAP3K7, MYD88, TICAM1, BIRC2, BIRC3 and UBE2N. Interacts (via RING-type zinc finger domain) with SRC. Interacts with CARD14. Interacts (via MATH domain) with PTPN22; the interaction promotes TRAF3 polyubiquitination. Interacts with MAVS. Directly interacts with DDX3X; this interaction stimulates TRAF3 'Lys-63' ubiquitination. Interacts with IRF3. Interacts with IKBKE in the course of viral infection. Interacts with TRIM35. Interacts with GAPDH; promoting TRAF3 ubiquitination. Interacts with PPP3CA and PPP3CB. Interacts with RALGDS. Interacts with FBXO11. Undergoes 'Lys-48'-linked polyubiquitination, leading to its proteasomal degradation in response to signaling by TNFSF13B, TLR4 or through CD40. 'Lys-48'-linked polyubiquitinated form is deubiquitinated by OTUD7B, preventing TRAF3 proteolysis and over-activation of non-canonical NF-kappa-B. Undergoes 'Lys-63'-linked ubiquitination during early stages of virus infection, and 'Lys-48'-linked ubiquitination during later stages. Undergoes both 'Lys-48'-linked and 'Lys-63'-linked ubiquitination in response to TLR3 and TLR4 signaling. 'Lys-63'-linked ubiquitination can be mediated by TRIM35. Deubiquitinated by OTUB1, OTUB2 and OTUD5. Undergoes 'Lys-63'-linked deubiquitination by MYSM1 to terminate the pattern-recognition receptors/PRRs pathways. Ubiquitinated at Lys-328 by the SCF(FBXL2) complex, leading to its degradation by the proteasome. Post-translationally, undergoes 'Lys-48'-linked polyubiquitination, leading to its proteasomal degradation in response to signaling by TNFSF13B, TLR4 or through CD40. 'Lys-48'-linked polyubiquitinated form is deubiquitinated by OTUD7B, preventing TRAF3 proteolysis and over-activation of non-canonical NF-kappa-B. Undergoes 'Lys-63'-linked ubiquitination during early stages of virus infection, and 'Lys-48'-linked ubiquitination during later stages. Undergoes both 'Lys-48'-linked and 'Lys-63'-linked ubiquitination in response to TLR3 and TLR4 signaling. 'Lys-63'-linked ubiquitination can be mediated by TRIM35. Deubiquitinated by OTUB1, OTUB2 and OTUD5. Undergoes 'Lys-63'-linked deubiquitination by MYSM1 to terminate the pattern-recognition receptors/PRRs pathways. Also undergoes 'Lys-29'-linked ubiquitination on Cys-55 and Cys-123 by NEDD4L; leading to increased 'Lys-48'- and 'Lys-63'-linked ubiquitination as well as increased binding to TBK1. TLR4 signals emanating from bacteria containing vesicles trigger 'Lys-33'-linked polyubiquitination that promotes the assembly of the exocyst complex thereby connecting innate immune signaling to the cellular trafficking apparatus. Deubiquitinated by USP25 during viral infection, leading to TRAF3 stabilization and type I interferon production. 'Lys-63'-linked ubiquitination by FBXO11 in a NEDD8-dependent manner promotes the amplification of IFN-I signaling. Detected in bone marrow macrophages and spleen B-cells (at protein level). In adult, highest in brain. Also found in kidney, heart, thymus, spleen, lung, muscle, testis and ovary. Not found in liver.

The protein localises to the cytoplasm. The protein resides in the endosome. It is found in the mitochondrion. It catalyses the reaction S-ubiquitinyl-[E2 ubiquitin-conjugating enzyme]-L-cysteine + [acceptor protein]-L-lysine = [E2 ubiquitin-conjugating enzyme]-L-cysteine + N(6)-ubiquitinyl-[acceptor protein]-L-lysine.. Functionally, cytoplasmic E3 ubiquitin ligase that regulates various signaling pathways, such as the NF-kappa-B, mitogen-activated protein kinase (MAPK) and interferon regulatory factor (IRF) pathways, and thus controls a lot of biological processes in both immune and non-immune cell types. In TLR and RLR signaling pathways, acts as an E3 ubiquitin ligase promoting the synthesis of 'Lys-63'-linked polyubiquitin chains on several substrates such as ASC that lead to the activation of the type I interferon response or the inflammasome. Following the activation of certain TLRs such as TLR4, acts as a negative NF-kappa-B regulator, possibly to avoid unregulated inflammatory response, and its degradation via 'Lys-48'-linked polyubiquitination is required for MAPK activation and production of inflammatory cytokines. Alternatively, when TLR4 orchestrates bacterial expulsion, TRAF3 undergoes 'Lys-33'-linked polyubiquitination and subsequently binds to RALGDS, mobilizing the exocyst complex to rapidly expel intracellular bacteria back for clearance. Also acts as a constitutive negative regulator of the alternative NF-kappa-B pathway, which controls B-cell survival and lymphoid organ development. Required for normal antibody isotype switching from IgM to IgG. Plays a role T-cell dependent immune responses. Down-regulates proteolytic processing of NFKB2, and thereby inhibits non-canonical activation of NF-kappa-B. Promotes ubiquitination and proteasomal degradation of MAP3K14. This chain is TNF receptor-associated factor 3, found in Mus musculus (Mouse).